A 1172-amino-acid chain; its full sequence is Structural maintenance of chromosomes protein 2 (1172 aa).

32–39 is a binding site for ATP; that stretch reads GLNGSGKS. 2 coiled-coil regions span residues 172–204 and 258–507; these read RMFE…EEIE and SHIA…AYME. The region spanning 520–640 is the SMC hinge domain; that stretch reads SKVKGLVAQL…CDTPESAKKV (121 aa). Positions 676–941 form a coiled coil; sequence LLQIQKLNSL…INHLEKENDW (266 aa).

Belongs to the SMC family. SMC2 subfamily. As to quaternary structure, forms a heterodimer with cut3/smc4. Component of the condensin complex, which contains the cut3 and cut14 heterodimer, and three non smc subunits that probably regulate the complex: cnd1, cnd2 and cnd3.

It is found in the nucleus. Its subcellular location is the cytoplasm. The protein resides in the chromosome. Its function is as follows. Central component of the condensin complex, a complex required for conversion of interphase chromatin into mitotic-like condense chromosomes. The condensin complex probably introduces positive supercoils into relaxed DNA in the presence of type I topoisomerases and converts nicked DNA into positive knotted forms in the presence of type II topoisomerases. This chain is Structural maintenance of chromosomes protein 2 (cut14), found in Schizosaccharomyces pombe (strain 972 / ATCC 24843) (Fission yeast).